The chain runs to 270 residues: tRNA pseudouridine synthase A (270 aa).

The active-site Nucleophile is the Asp-51. Position 109 (Tyr-109) interacts with substrate.

Belongs to the tRNA pseudouridine synthase TruA family. In terms of assembly, homodimer.

The enzyme catalyses uridine(38/39/40) in tRNA = pseudouridine(38/39/40) in tRNA. Formation of pseudouridine at positions 38, 39 and 40 in the anticodon stem and loop of transfer RNAs. The polypeptide is tRNA pseudouridine synthase A (Burkholderia multivorans (strain ATCC 17616 / 249)).